Here is a 239-residue protein sequence, read N- to C-terminus: Probable transcriptional regulatory protein lin0388 (239 aa).

This sequence belongs to the TACO1 family. YeeN subfamily.

The protein resides in the cytoplasm. The sequence is that of Probable transcriptional regulatory protein lin0388 from Listeria innocua serovar 6a (strain ATCC BAA-680 / CLIP 11262).